A 353-amino-acid polypeptide reads, in one-letter code: Guanine nucleotide-binding protein subunit beta-5 (353 aa).

7 WD repeats span residues 61–100 (GHGN…KEHA), 103–142 (MPCT…NENM), 151–192 (MHTN…QSFH), 194–236 (HGAD…QAFE), 237–276 (THES…EVAI), 278–320 (SKES…RVSI), and 323–352 (GHEN…LRVW).

Belongs to the WD repeat G protein beta family. Component of a complex composed of RGS9 (isoform RGS9-1), GNB5 and RGS9BP; within this complex, the presence of GNB5 stabilizes both itself and RGS9 and increases RGS9 GTPase-activating protein (GAP) activity. Interacts with RGS7, forming the RGS7-GNB5 complex; within this complex, the presence of GNB5 increases RGS7 GTPase-activating protein (GAP) activity. Interacts with GPR158; promotes the GTPase activator activity of the RGS7-GNB5 complex in absence of glycine, in contrast GTPase activator activity of the RGS7-GNB5 complex is inhibited in presence of glycine. Interacts with RGS6. In terms of tissue distribution, detected in brain.

It localises to the membrane. Enhances GTPase-activating protein (GAP) activity of regulator of G protein signaling (RGS) proteins, such as RGS7 and RGS9, hence involved in the termination of the signaling initiated by the G protein coupled receptors (GPCRs) by accelerating the GTP hydrolysis on the G-alpha subunits, thereby promoting their inactivation. Increases RGS7 GTPase-activating protein (GAP) activity, thereby regulating mood and cognition. Increases RGS9 GTPase-activating protein (GAP) activity, hence contributes to the deactivation of G protein signaling initiated by D(2) dopamine receptors. May play an important role in neuronal signaling, including in the parasympathetic, but not sympathetic, control of heart rate. The sequence is that of Guanine nucleotide-binding protein subunit beta-5 (Gnb5) from Rattus norvegicus (Rat).